We begin with the raw amino-acid sequence, 144 residues long: MWLQGLLLLGTVACSISAPARSPSPGTQPWEHVNAIQEARRLLNLSRDTAAEMNKTVEVVSEMFDLQEPSCLQTRLELYKQGLQGSLTKLKGPLTMMASHYKQHCPPTPETSCATQMITFQSFKENLKDFLLVIPFDCWEPVQE.

Positions 1 to 17 are cleaved as a signal peptide; it reads MWLQGLLLLGTVACSIS. Ser-24 is a glycosylation site (O-linked (GalNAc...) serine). O-linked (GalNAc...) threonine glycosylation occurs at Thr-27. 2 N-linked (GlcNAc...) asparagine glycosylation sites follow: Asn-44 and Asn-54. Cystine bridges form between Cys-71/Cys-113 and Cys-105/Cys-138.

It belongs to the GM-CSF family. In terms of assembly, monomer. The signaling GM-CSF receptor complex is a dodecamer of two head-to-head hexamers of two alpha, two beta, and two ligand subunits.

It localises to the secreted. Functionally, cytokine that stimulates the growth and differentiation of hematopoietic precursor cells from various lineages, including granulocytes, macrophages, eosinophils and erythrocytes. This is Granulocyte-macrophage colony-stimulating factor (CSF2) from Chlorocebus aethiops (Green monkey).